The sequence spans 396 residues: Protein PIN-LIKES 5 (396 aa).

The Lumenal portion of the chain corresponds to 1–5; it reads MGFWS. A helical membrane pass occupies residues 6-26; the sequence is LLEVASMPVIQVLFMSLVGAF. Over 27-45 the chain is Cytoplasmic; the sequence is MASDRCKLFPVEARNSMNK. Residues 46 to 66 form a helical membrane-spanning segment; that stretch reads VVFVLFAPALMFANLAQTVTL. The Lumenal segment spans residues 67 to 73; the sequence is EDIISWW. Residues 74 to 94 traverse the membrane as a helical segment; the sequence is FMPVNMGLTFLIGGLLGWLVV. Topologically, residues 95–106 are cytoplasmic; it reads KILKPPPYLEGL. A helical membrane pass occupies residues 107-127; it reads IVATCSAGNMGNLPIILVPAI. The Lumenal segment spans residues 128 to 144; that stretch reads CDEDKSPFGNRSVCRTV. Residues 145-165 form a helical membrane-spanning segment; that stretch reads GLSYASFSMALGGFYIWTYTF. The Cytoplasmic portion of the chain corresponds to 166 to 229; that stretch reads RLIKGSAMKV…WRKGVDFLHE (64 aa). Residues 230 to 250 traverse the membrane as a helical segment; sequence ILEELLAPPTLGAIIGFIFGA. Residues 251–273 lie on the Lumenal side of the membrane; the sequence is VRWLRNLIIGDDAPLRIVQSTAK. A helical membrane pass occupies residues 274–294; sequence LLGDGTIPCMTIILGGNLIQG. Over 295–312 the chain is Cytoplasmic; sequence LRSSAVKPMVVLGIVCVR. Residues 313-333 form a helical membrane-spanning segment; the sequence is YIAMPIIGIGIVLTAANLGFL. The Lumenal portion of the chain corresponds to 334 to 337; it reads PADP. Residues 338–358 traverse the membrane as a helical segment; sequence LFQYVLMLQFTLPPAMNIGTM. Residues 359-370 are Cytoplasmic-facing; the sequence is TQLYNVAQDECS. Residues 371 to 391 traverse the membrane as a helical segment; the sequence is VLMLWTYLVAILALTVWSTIF. Over 392–396 the chain is Lumenal; it reads LHLLV.

The protein belongs to the auxin efflux carrier (TC 2.A.69.2) family. Expressed in seedlings, cauline leaves and flowers.

It localises to the endoplasmic reticulum membrane. Involved in cellular auxin homeostasis by regulating auxin metabolism. Regulates intracellular auxin accumulation at the endoplasmic reticulum and thus auxin availability for nuclear auxin signaling. The sequence is that of Protein PIN-LIKES 5 from Arabidopsis thaliana (Mouse-ear cress).